The sequence spans 209 residues: Lipopolysaccharide export system protein LptC (209 aa).

A helical membrane pass occupies residues N7 to Y26.

Belongs to the LptC family. In terms of assembly, component of the lipopolysaccharide transport and assembly complex. Interacts with LptA and the LptBFG transporter complex.

It localises to the cell inner membrane. Its function is as follows. Involved in the assembly of lipopolysaccharide (LPS). Required for the translocation of LPS from the inner membrane to the outer membrane. Facilitates the transfer of LPS from the inner membrane to the periplasmic protein LptA. Could be a docking site for LptA. This Haemophilus influenzae (strain ATCC 51907 / DSM 11121 / KW20 / Rd) protein is Lipopolysaccharide export system protein LptC.